We begin with the raw amino-acid sequence, 157 residues long: MMDILMYLFETYIQSDVELLVDQDELSDELSRAGFHQDDIYKALNWLEKLAALQETETIPYMNNSAITSIRVYIPQEMARMDVTCRGFLTYLEQIHVLSADTREMVIDRVMELETSDFVLDDLKWIILMVLFNAPGNENAYTQMEELLYGAEDGYIH.

It belongs to the Smg family.

The polypeptide is Protein Smg homolog (Photobacterium profundum (strain SS9)).